Reading from the N-terminus, the 176-residue chain is uncharacterized protein (176 aa).

The interval 71 to 176 (RDDMSSDSDG…YSTDDDEDDY (106 aa)) is disordered. 2 stretches are compositionally biased toward low complexity: residues 77–87 (DSDGPAASPPG) and 100–109 (SYSSSDSSAR). Residues 140-152 (KARRPARKKKRIG) show a composition bias toward basic residues.

This is an uncharacterized protein from Orgyia pseudotsugata multicapsid polyhedrosis virus (OpMNPV).